The following is a 119-amino-acid chain: Putative phosphoethanolamine transferase YjgX (119 aa).

2 consecutive transmembrane segments (helical) span residues V5–W25 and L94–Y114.

The protein belongs to the phosphoethanolamine transferase family.

It is found in the cell inner membrane. The chain is Putative phosphoethanolamine transferase YjgX (yjgX) from Escherichia coli (strain K12).